The chain runs to 59 residues: Large ribosomal subunit protein uL30 (59 aa).

The protein belongs to the universal ribosomal protein uL30 family. Part of the 50S ribosomal subunit.

This chain is Large ribosomal subunit protein uL30, found in Nocardia farcinica (strain IFM 10152).